Consider the following 247-residue polypeptide: Lysosomal membrane ascorbate-dependent ferrireductase CYB561A3 (247 aa).

Topologically, residues 1 to 3 (MRG) are cytoplasmic. Residues 4–24 (IVGFYITYLLCLILGIACVVL) traverse the membrane as a helical segment. The region spanning 13-223 (LCLILGIACV…FGLVVLKILS (211 aa)) is the Cytochrome b561 domain. The Lumenal segment spans residues 25–46 (VVHWNFMYRDGFAWDGSSKNFN). The chain crosses the membrane as a helical span at residues 47 to 67 (WHPVLMVTGMLVLYGNAAVVY). Residues H48 and R68 each coordinate heme b. Topologically, residues 68 to 82 (RIPLTWGHNKLPWKL) are cytoplasmic. L-ascorbate contacts are provided by K77 and K81. The helical transmembrane segment at 83-103 (LHAGLLLLSFIFSVIGLCAVF) threads the bilayer. Heme b-binding positions include H84, 113 to 116 (NLYS), and H118. The Lumenal portion of the chain corresponds to 104-120 (NFHNVHHTANLYSLHSW). Residues 121–141 (VGICTAALFTAQWVMGFTSFL) form a helical membrane-spanning segment. Over 142–155 (LPCTPMAVRAFVKP) the chain is Cytoplasmic. R150 contributes to the L-ascorbate binding site. Residues 156 to 176 (THVWMGAMILVLSIVSCISGI) traverse the membrane as a helical segment. Residues H157 and E178 each coordinate heme b. Over 177–201 (NEKLFFVLKETTNGTKPYSALPPEA) the chain is Lumenal. The N-linked (GlcNAc...) asparagine glycan is linked to N189. A helical membrane pass occupies residues 202–222 (VAANSLGVIIVAFGLVVLKIL). At 223 to 247 (SNQMWQRPEPGDDEGVYRPLAYDGS) the chain is on the cytoplasmic side. Q228 lines the heme b pocket.

In terms of assembly, homodimer. It depends on heme b as a cofactor.

It is found in the late endosome membrane. Its subcellular location is the lysosome membrane. It carries out the reaction Fe(3+)(out) + L-ascorbate(in) = monodehydro-L-ascorbate radical(in) + Fe(2+)(out) + H(+). Transmembrane reductase that uses ascorbate as an electron donor in the cytoplasm and transfers electrons across membranes to reduce iron cations Fe(3+) into Fe(2+) in the lumen of the late endosome and lysosome. Reduced iron can then be extruded from the late endosome and lysosome to the cytoplasm by divalent metal-specific transporters. It is therefore most probably involved in endosomal and lysosomal cellular iron homeostasis. This Danio rerio (Zebrafish) protein is Lysosomal membrane ascorbate-dependent ferrireductase CYB561A3 (cyb561a3a).